The following is an 819-amino-acid chain: Leucine--tRNA ligase (819 aa).

The 'HIGH' region motif lies at 40–51; sequence PYPSGAGLHVGH. Residues 600–604 carry the 'KMSKS' region motif; sequence KMSKS. ATP is bound at residue K603.

It belongs to the class-I aminoacyl-tRNA synthetase family.

It localises to the cytoplasm. The catalysed reaction is tRNA(Leu) + L-leucine + ATP = L-leucyl-tRNA(Leu) + AMP + diphosphate. This Chlamydia muridarum (strain MoPn / Nigg) protein is Leucine--tRNA ligase.